The chain runs to 363 residues: MDNYTYSELLKSLQNKCDNIALIIKPEKIKQELERIEKEQEDPNFWQDVLKARDTNKEKVRLNRLLETYQKTKNSLDESVELFELAQNDNDEVTLSLLYEEAPTLEHSVQKVEIEIMLSGENDASNAIITIQPGAGGTESQDWASILYRMYLRWAERRGFKSEILDYQDGEEAGIKGVAFIIKGENAYGYLKNENGVHRLVRISPFDANAKRHTSFASVQISPELDDDIDIEIDEKDVRYDYYRASGAGGQHVNKTESAVRITHFPTGIVVQCQNDRSQHKNKASALKMLKSKLYELELEKQQSSAKNEEKSEIGWGHQIRSYVLAPYQQVKDARSNIAYSNVEAILDGDIDAILEGVLIAKA.

At glutamine 251 the chain carries N5-methylglutamine.

This sequence belongs to the prokaryotic/mitochondrial release factor family. Methylated by PrmC. Methylation increases the termination efficiency of RF2.

Its subcellular location is the cytoplasm. In terms of biological role, peptide chain release factor 2 directs the termination of translation in response to the peptide chain termination codons UGA and UAA. The protein is Peptide chain release factor 2 of Helicobacter pylori (strain HPAG1).